We begin with the raw amino-acid sequence, 75 residues long: Conotoxin Vc6.15 (75 aa).

Positions 1–19 are cleaved as a signal peptide; the sequence is MEKLTILLHVAAVLMSTQA. Positions 20-41 are excised as a propeptide; sequence LIQEQRQKAKINLFSKRKPSAE. 3 cysteine pairs are disulfide-bonded: Cys-49-Cys-62, Cys-55-Cys-66, and Cys-61-Cys-71.

The protein belongs to the conotoxin O2 superfamily. As to expression, expressed by the venom duct.

The protein resides in the secreted. Inhibits voltage-gated ion channels. This chain is Conotoxin Vc6.15, found in Conus victoriae (Queen Victoria cone).